Consider the following 709-residue polypeptide: Pentatricopeptide repeat-containing protein At5g42310, chloroplastic (709 aa).

The transit peptide at Met1 to Ser54 directs the protein to the chloroplast. 14 PPR repeats span residues Thr196–Ser230, Asp231–Leu267, Asp268–Ala302, Lys303–Pro337, Arg338–Pro372, Asp373–Pro407, Asn408–Pro442, Asp443–Pro477, Asp478–Pro512, Cys513–Pro547, Asn548–Pro582, Ser583–Pro617, Ser618–Pro652, and Asp653–Pro687.

The protein belongs to the PPR family. P subfamily. In terms of assembly, interacts with PDE338.

The protein resides in the plastid. The protein localises to the chloroplast stroma. Its subcellular location is the chloroplast thylakoid. It localises to the chloroplast. In terms of biological role, required for chloroplast protein synthesis and accumulation of subunits of the thylakoid protein complexes. Activates psaC and petA translation by binding their 5'-UTRs. Required for the correct processing of petB and petD mRNAs. Interacts with the petB and petD intergenic region and is required for the generation of petB and petD monocistronic RNAs. This Arabidopsis thaliana (Mouse-ear cress) protein is Pentatricopeptide repeat-containing protein At5g42310, chloroplastic.